The following is a 271-amino-acid chain: ATP synthase subunit delta (271 aa).

The protein belongs to the ATPase delta chain family. In terms of assembly, F-type ATPases have 2 components, F(1) - the catalytic core - and F(0) - the membrane proton channel. F(1) has five subunits: alpha(3), beta(3), gamma(1), delta(1), epsilon(1). F(0) has three main subunits: a(1), b(2) and c(10-14). The alpha and beta chains form an alternating ring which encloses part of the gamma chain. F(1) is attached to F(0) by a central stalk formed by the gamma and epsilon chains, while a peripheral stalk is formed by the delta and b chains.

The protein resides in the cell membrane. In terms of biological role, f(1)F(0) ATP synthase produces ATP from ADP in the presence of a proton or sodium gradient. F-type ATPases consist of two structural domains, F(1) containing the extramembraneous catalytic core and F(0) containing the membrane proton channel, linked together by a central stalk and a peripheral stalk. During catalysis, ATP synthesis in the catalytic domain of F(1) is coupled via a rotary mechanism of the central stalk subunits to proton translocation. Functionally, this protein is part of the stalk that links CF(0) to CF(1). It either transmits conformational changes from CF(0) to CF(1) or is implicated in proton conduction. The protein is ATP synthase subunit delta of Corynebacterium kroppenstedtii (strain DSM 44385 / JCM 11950 / CIP 105744 / CCUG 35717).